Reading from the N-terminus, the 254-residue chain is Type II restriction enzyme HpaI (254 aa).

It catalyses the reaction Endonucleolytic cleavage of DNA to give specific double-stranded fragments with terminal 5'-phosphates.. In terms of biological role, a P subtype restriction enzyme that recognizes the double-stranded sequence 5'-GTTAAC-3' and cleaves after T-3. The protein is Type II restriction enzyme HpaI (hpaIR) of Haemophilus parainfluenzae.